A 710-amino-acid chain; its full sequence is Nucleolin (710 aa).

Residues 1 to 303 are disordered; it reads MVKLAKAGKN…KKQKVEGTEP (303 aa). N6-acetyllysine occurs at positions 9, 15, and 16. A compositionally biased stretch (acidic residues) spans 24 to 43; that stretch reads VEEDSEDEEMSEDEEDDSSG. 4 positions are modified to phosphoserine: serine 28, serine 34, serine 41, and serine 42. The segment covering 56–107 has biased composition (low complexity); the sequence is AAATSAKKVVVSPTKKVAVATPAKKAAVTPGKKAAATPAKKTVTPAKAVTTP. Repeat unit 1 spans residues 58-65; it reads ATSAKKVV. The 8 X 8 AA tandem repeats of X-T-P-X-K-K-X-X stretch occupies residues 58-135; that stretch reads ATSAKKVVVS…GAAIPAKGAK (78 aa). At serine 67 the chain carries Phosphoserine. A phosphothreonine mark is found at threonine 69, threonine 76, threonine 84, and threonine 92. Tandem repeats lie at residues 75-82, 83-90, and 91-98. Position 96 is an N6-acetyllysine (lysine 96). A Phosphothreonine modification is found at threonine 99. Residues 99–104 form a 5; truncated repeat; that stretch reads TPAKAV. Lysine 102 is subject to N6-acetyllysine. The stretch at 105–112 is repeat 6; sequence TTPGKKGA. Threonine 106 bears the Phosphothreonine mark. Lysine 109 is modified (N6-acetyllysine). Threonine 113 carries the phosphothreonine modification. Lysine 116 carries the post-translational modification N6-acetyllysine. A run of 2 repeats spans residues 120-127 and 128-135. A Phosphothreonine modification is found at threonine 121. Over residues 122-137 the composition is skewed to low complexity; that stretch reads PGKKGAAIPAKGAKNG. Lysine 124 carries the N6-acetyllysine modification. 2 positions are modified to phosphoserine: serine 145 and serine 153. A compositionally biased stretch (acidic residues) spans 145-171; the sequence is SDEEEDDDSEEDEEDDEDEDEDEDEIE. Over residues 172–183 the composition is skewed to low complexity; that stretch reads PAAMKAAAAAPA. Phosphoserine occurs at positions 184 and 206. Residues 184-211 show a composition bias toward acidic residues; sequence SEDEDDEDDEDDEDDDDDEEDDSEEEAM. Position 214 is a phosphothreonine (threonine 214). Acidic residues predominate over residues 234 to 272; sequence EDEDEEEDDEDEDDDDDEDDEDDDDEDDEEEEEEEEEEP. The span at 273-300 shows a compositional bias: basic and acidic residues; it reads VKEAPGKRKKEMAKQKAAPEAKKQKVEG. A Glycyl lysine isopeptide (Lys-Gly) (interchain with G-Cter in SUMO1); alternate cross-link involves residue lysine 297. A Glycyl lysine isopeptide (Lys-Gly) (interchain with G-Cter in SUMO2); alternate cross-link involves residue lysine 297. Threonine 301 carries the post-translational modification Phosphothreonine. 2 consecutive RRM domains span residues 307–383 and 393–466; these read FNLF…KPKG and RTLL…YTGE. Position 318 is an N6-acetyllysine (lysine 318). Lysine 324 is covalently cross-linked (Glycyl lysine isopeptide (Lys-Gly) (interchain with G-Cter in SUMO1); alternate). A Glycyl lysine isopeptide (Lys-Gly) (interchain with G-Cter in SUMO2); alternate cross-link involves residue lysine 324. Lysine 348 carries the N6-acetyllysine modification. Phosphoserine is present on serine 356. Residue threonine 367 is modified to Phosphothreonine. A Glycyl lysine isopeptide (Lys-Gly) (interchain with G-Cter in SUMO2) cross-link involves residue lysine 370. Residue lysine 377 forms a Glycyl lysine isopeptide (Lys-Gly) (interchain with G-Cter in SUMO2); alternate linkage. Lysine 377 carries the N6-acetyllysine; alternate modification. An N6-acetyllysine mark is found at lysine 398 and lysine 403. Residue threonine 405 is modified to Phosphothreonine. N6-acetyllysine is present on residues lysine 427 and lysine 444. 2 positions are modified to phosphoserine: serine 458 and serine 460. An N6-acetyllysine mark is found at lysine 467 and lysine 477. One can recognise an RRM 3 domain in the interval 486-560; the sequence is KTLVLSNLSY…RAIRLELQGP (75 aa). Lysine 513 participates in a covalent cross-link: Glycyl lysine isopeptide (Lys-Gly) (interchain with G-Cter in SUMO2); alternate. An N6-acetyllysine; alternate modification is found at lysine 513. Residue lysine 521 is modified to N6-acetyllysine. Phosphoserine is present on serine 563. Position 572 is an N6-acetyllysine (lysine 572). The RRM 4 domain occupies 572–647; the sequence is KTLFVKGLSE…NKVTLDWAKP (76 aa). Lysine 577 is covalently cross-linked (Glycyl lysine isopeptide (Lys-Gly) (interchain with G-Cter in SUMO2); alternate). Lysine 577 carries the N6-acetyllysine; alternate modification. Position 580 is a phosphoserine (serine 580). A Glycyl lysine isopeptide (Lys-Gly) (interchain with G-Cter in SUMO1); alternate cross-link involves residue lysine 589. A Glycyl lysine isopeptide (Lys-Gly) (interchain with G-Cter in SUMO2); alternate cross-link involves residue lysine 589. 2 positions are modified to phosphoserine: serine 591 and serine 619. Lysine 624 participates in a covalent cross-link: Glycyl lysine isopeptide (Lys-Gly) (interchain with G-Cter in SUMO2). The disordered stretch occupies residues 640–710; sequence VTLDWAKPKG…KPQGKKTKFE (71 aa). Position 646 is an N6-acetyllysine (lysine 646). A compositionally biased stretch (gly residues) spans 650 to 696; sequence EGGFGGRGGGRGGFGGRGGGRGGRGGFGGRGRGGFGGRGGFRGGRGG. An asymmetric dimethylarginine mark is found at arginine 656, arginine 660, arginine 666, arginine 670, arginine 673, arginine 679, arginine 681, arginine 687, and arginine 691. Arginine 694 carries the asymmetric dimethylarginine; alternate modification. An Omega-N-methylarginine; alternate modification is found at arginine 694. The segment covering 697 to 710 has biased composition (basic and acidic residues); the sequence is GGDHKPQGKKTKFE.

Identified in a IGF2BP1-dependent mRNP granule complex containing untranslated mRNAs. Component of the SWAP complex that consists of NPM1, NCL/nucleolin, PARP1 and SWAP70. Component of a complex which is at least composed of HTATSF1/Tat-SF1, the P-TEFb complex components CDK9 and CCNT1, RNA polymerase II, SUPT5H, and NCL/nucleolin. Interacts with AICDA. Interacts with APTX. Interacts with C1QBP. Interacts with ERBB4. Interacts (via C-terminus) with FMR1 isoform 6 (via N-terminus). Interacts with GZF1; this interaction is important for nucleolar localization of GZF1. Interacts with NSUN2. Interacts with NVL. Interacts (via N-terminus domain) with SETX. Interacts (via RRM1 and C-terminal RRM4/Arg/Gly-rich domains) with TERT; the interaction is important for nucleolar localization of TERT. Interacts with WDR46. Interacts with ZFP36. Interacts with LRRC34. Interacts with RRP1B. Interacts with HNRNPU; this interaction occurs during mitosis. Interacts with RIOK1; RIOK1 recruits NCL to PRMT5 for symmetrically methylation. Interacts with ZBTB7B. Interacts with MDK; this interaction promotes NCL clustering and lateral movements of this complex into lipid rafts leading to MDK internalization. Interacts with HDGF (isoform 1). Interacts with ALKBH2. Interacts with IGFBP5; this interaction is necessary for IGFBP5 localization to the nucleus. Interacts with DDX24 (when ubiquitinated); this interaction may be important during ribosome biogenesis. Some glutamate residues are glycylated by TTLL8. This modification occurs exclusively on glutamate residues and results in a glycine chain on the gamma-carboxyl group. Post-translationally, symmetrically methylated by PRMT5.

The protein localises to the nucleus. It localises to the nucleolus. The protein resides in the cytoplasm. Nucleolin is the major nucleolar protein of growing eukaryotic cells. It is found associated with intranucleolar chromatin and pre-ribosomal particles. It induces chromatin decondensation by binding to histone H1. It is thought to play a role in pre-rRNA transcription and ribosome assembly. May play a role in the process of transcriptional elongation. Binds RNA oligonucleotides with 5'-UUAGGG-3' repeats more tightly than the telomeric single-stranded DNA 5'-TTAGGG-3' repeats. In Homo sapiens (Human), this protein is Nucleolin (NCL).